Here is a 131-residue protein sequence, read N- to C-terminus: Single-stranded DNA-binding protein 2 (131 aa).

The SSB domain maps to 1–103 (MYNKVIMIGR…VLASSFQLLE (103 aa)). The Important for interaction with partner proteins motif lies at 126 to 131 (EEELPF).

In terms of assembly, homotetramer.

Plays an important role in DNA replication, recombination and repair. Binds to ssDNA and to an array of partner proteins to recruit them to their sites of action during DNA metabolism. The sequence is that of Single-stranded DNA-binding protein 2 (ssb2) from Streptococcus agalactiae serotype V (strain ATCC BAA-611 / 2603 V/R).